Consider the following 948-residue polypeptide: Zinc finger CCCH domain-containing protein 3 (948 aa).

4 disordered regions span residues 25–108, 121–219, 265–296, and 336–493; these read HGNA…VPQQ, QNVV…RRTV, VDAGHTDQPVPSGSVGGPARPASGPRQAREAS, and NVCK…LKKT. Basic residues predominate over residues 56 to 74; the sequence is RPSRRGYSSHHGPSWRKKY. Residues 128-141 show a composition bias toward low complexity; that stretch reads KPPSKSGSASASGA. Residues 157–166 show a composition bias toward basic and acidic residues; it reads QRPREGEGEP. Low complexity predominate over residues 372–398; it reads SAPSKYKWKASSPSASSSSSFRWQSEA. The span at 405–415 shows a compositional bias: polar residues; the sequence is SQLSPVLSRSP. Serine 408 is modified (phosphoserine). A compositionally biased stretch (basic residues) spans 441 to 452; sequence VKSRTKIIRRRS. C3H1-type zinc fingers lie at residues 667 to 695, 699 to 722, 723 to 749, 750 to 777, and 778 to 800; these read EKRKEYCMYYNRFGRCNRGERCPYIHDPE, VCTRFVRGTCKKTDGTCPFSHHVS, KEKMPVCSYFLKGICSNSNCPYSHVYV, SRKAEVCSDFLKGYCPLGAKCKKKHTLL, and CPDFARRGACPRGAQCQLLHRTQ. Disordered stretches follow at residues 798-891 and 913-948; these read RTQK…HEAP and ISLQSSPSPGAQPRVRAPRAPLTKDSGKPLHIKPRL. The segment covering 834-846 has biased composition (polar residues); that stretch reads SASQRPTRQTPSS. Composition is skewed to low complexity over residues 847 to 856 and 864 to 885; these read AALTAAAVAA and SASPSSSKASSSSSSSSSPPAS. A phosphoserine mark is found at serine 918 and serine 920.

Interacts with SMAD1, SMAD3, SMAD4, CPSF2 and CPSF3.

The protein localises to the nucleus. Its function is as follows. Required for the export of polyadenylated mRNAs from the nucleus. Enhances ACVR1B-induced SMAD-dependent transcription. Binds to single-stranded DNA but not to double-stranded DNA in vitro. Involved in RNA cleavage. The polypeptide is Zinc finger CCCH domain-containing protein 3 (ZC3H3) (Homo sapiens (Human)).